Consider the following 265-residue polypeptide: Ribosomal RNA small subunit methyltransferase A (265 aa).

Histidine 13, leucine 15, glycine 40, glutamate 61, aspartate 85, and asparagine 103 together coordinate S-adenosyl-L-methionine.

The protein belongs to the class I-like SAM-binding methyltransferase superfamily. rRNA adenine N(6)-methyltransferase family. RsmA subfamily.

The protein localises to the cytoplasm. The enzyme catalyses adenosine(1518)/adenosine(1519) in 16S rRNA + 4 S-adenosyl-L-methionine = N(6)-dimethyladenosine(1518)/N(6)-dimethyladenosine(1519) in 16S rRNA + 4 S-adenosyl-L-homocysteine + 4 H(+). Functionally, specifically dimethylates two adjacent adenosines (A1518 and A1519) in the loop of a conserved hairpin near the 3'-end of 16S rRNA in the 30S particle. May play a critical role in biogenesis of 30S subunits. This Bordetella pertussis (strain Tohama I / ATCC BAA-589 / NCTC 13251) protein is Ribosomal RNA small subunit methyltransferase A.